A 330-amino-acid chain; its full sequence is uncharacterized protein (330 aa).

In terms of domain architecture, ABC transporter spans 4 to 242; sequence LTISDLVVEY…AGEVLFEQST (239 aa). 40-47 contributes to the ATP binding site; the sequence is GPSGCGKT. Residue 210-330 participates in a nucleoside 3',5'-cyclic phosphate binding; that stretch reads DRVLELMPAQ…LIEHRELASE (121 aa).

This sequence belongs to the ABC transporter superfamily.

This is an uncharacterized protein from Mycobacterium bovis (strain ATCC BAA-935 / AF2122/97).